The following is a 57-amino-acid chain: Large ribosomal subunit protein bL32 (57 aa).

Belongs to the bacterial ribosomal protein bL32 family.

In Streptomyces avermitilis (strain ATCC 31267 / DSM 46492 / JCM 5070 / NBRC 14893 / NCIMB 12804 / NRRL 8165 / MA-4680), this protein is Large ribosomal subunit protein bL32.